We begin with the raw amino-acid sequence, 397 residues long: Putative nickel insertion protein (397 aa).

It belongs to the LarC family.

This Synechococcus sp. (strain JA-2-3B'a(2-13)) (Cyanobacteria bacterium Yellowstone B-Prime) protein is Putative nickel insertion protein.